A 299-amino-acid polypeptide reads, in one-letter code: Circadian clock oscillator protein KaiA (299 aa).

The interval 1-135 (MQSPLSLCLF…LHLGPICTLP (135 aa)) is psR domain, binds oxidized quinones. One can recognise a KaiA N-terminal domain in the interval 1–169 (MQSPLSLCLF…RLADKLKERL (169 aa)). A flexible linker region spans residues 170–178 (GYLGVYYKR). Positions 179 to 287 (KPSHFYRNFS…GEMYRRSIPR (109 aa)) constitute a KaiA C-terminal domain.

The protein belongs to the KaiA family. In terms of assembly, homodimer. The KaiABC1 complex composition changes during the circadian cycle to control KaiC1 phosphorylation. Complexes KaiC1(6), KaiA(2-4):KaiC1(6), KaiB(6):KaiC1(6) and KaiC1(6):KaiB(6):KaiA(12) are among the most important forms, many form cooperatively. KaiA and CikA bind to the same region of the KaiB(fs) form and therefore compete. Interacts with KaiC1 but not KaiC2 or KaiC3. Interacts with itself, not seen to interact with other Kai proteins.

Key component of the KaiABC oscillator complex, which constitutes the main circadian regulator in cyanobacteria. Complex composition changes during the circadian cycle to control KaiC phosphorylation. KaiA stimulates KaiC autophosphorylation, while KaiB sequesters KaiA, leading to KaiC autodephosphorylation. KaiA binding to the KaiC CII domain during the subjective day yields KaiA(2-4):KaiC(6) complexes which stimulate KaiC autophosphorylation. Phospho-Ser-431 KaiC accumulation triggers binding of KaiB during the subjective night to form the KaiB(6):KaiC(6) complex, leading to changes in the output regulators CikA and SasA. KaiB(6):KaiC(6) formation exposes a site for KaiA binding on KaiB that sequesters KaiA from KaiC's CII domain, making the KaiC(6):KaiB(6):KaiA(12) complex resulting in KaiC autodephosphorylation. Complete dephosphorylation of KaiC leads to dissociation of KaiA(2):KaiB(1), completing 1 cycle of the Kai oscillator. Functionally, component of the oscillator and circadian clock in this organism, enhances fitness in a rhythmic environment. Stimulates KaiC1 to autophosphorylate, has no effect on the kinase activity of KaiC2 or KaiC3. Its function is as follows. Binds oxidized quinones via the N-terminal PsR domain, allowing it to sense redox changes and possibly mediate clock input. This Synechocystis sp. (strain ATCC 27184 / PCC 6803 / Kazusa) protein is Circadian clock oscillator protein KaiA.